Consider the following 660-residue polypeptide: Bifunctional polymyxin resistance protein ArnA (660 aa).

Residues Met1–Leu304 form a formyltransferase ArnAFT region. Catalysis depends on His104, which acts as the Proton donor; for formyltransferase activity. Residues Arg114 and Val136–Asp140 each bind (6R)-10-formyltetrahydrofolate. The dehydrogenase ArnADH stretch occupies residues Arg314 to Ser660. NAD(+) is bound by residues Asp347 and Asp368–Ile369. Residues Ala393, Tyr398, and Thr432 to Ser433 each bind UDP-alpha-D-glucuronate. Glu434 (proton acceptor; for decarboxylase activity) is an active-site residue. UDP-alpha-D-glucuronate is bound by residues Arg460, Asn492, Lys526–Arg535, and Tyr613. Arg619 functions as the Proton donor; for decarboxylase activity in the catalytic mechanism.

This sequence in the N-terminal section; belongs to the Fmt family. UDP-L-Ara4N formyltransferase subfamily. The protein in the C-terminal section; belongs to the NAD(P)-dependent epimerase/dehydratase family. UDP-glucuronic acid decarboxylase subfamily. Homohexamer, formed by a dimer of trimers.

It catalyses the reaction UDP-alpha-D-glucuronate + NAD(+) = UDP-beta-L-threo-pentopyranos-4-ulose + CO2 + NADH. It carries out the reaction UDP-4-amino-4-deoxy-beta-L-arabinose + (6R)-10-formyltetrahydrofolate = UDP-4-deoxy-4-formamido-beta-L-arabinose + (6S)-5,6,7,8-tetrahydrofolate + H(+). Its pathway is nucleotide-sugar biosynthesis; UDP-4-deoxy-4-formamido-beta-L-arabinose biosynthesis; UDP-4-deoxy-4-formamido-beta-L-arabinose from UDP-alpha-D-glucuronate: step 1/3. It participates in nucleotide-sugar biosynthesis; UDP-4-deoxy-4-formamido-beta-L-arabinose biosynthesis; UDP-4-deoxy-4-formamido-beta-L-arabinose from UDP-alpha-D-glucuronate: step 3/3. It functions in the pathway bacterial outer membrane biogenesis; lipopolysaccharide biosynthesis. Bifunctional enzyme that catalyzes the oxidative decarboxylation of UDP-glucuronic acid (UDP-GlcUA) to UDP-4-keto-arabinose (UDP-Ara4O) and the addition of a formyl group to UDP-4-amino-4-deoxy-L-arabinose (UDP-L-Ara4N) to form UDP-L-4-formamido-arabinose (UDP-L-Ara4FN). The modified arabinose is attached to lipid A and is required for resistance to polymyxin and cationic antimicrobial peptides. This is Bifunctional polymyxin resistance protein ArnA from Salmonella paratyphi B (strain ATCC BAA-1250 / SPB7).